Here is an 83-residue protein sequence, read N- to C-terminus: Mitochondrial import inner membrane translocase subunit Tim8 B (83 aa).

At Ala2 the chain carries N-acetylalanine. Residues 36–59 (CWDKCVEKPGSRLDSRTENCLSSC) carry the Twin CX3C motif motif. Cystine bridges form between Cys36–Cys59 and Cys40–Cys55.

Belongs to the small Tim family. In terms of assembly, heterohexamer; possibly composed of 3 copies of TIMM8B and 3 copies of TIMM13, named soluble 70 kDa complex. Associates with the TIM22 complex, whose core is composed of TIMM22.

The protein resides in the mitochondrion inner membrane. Functionally, probable mitochondrial intermembrane chaperone that participates in the import and insertion of some multi-pass transmembrane proteins into the mitochondrial inner membrane. Also required for the transfer of beta-barrel precursors from the TOM complex to the sorting and assembly machinery (SAM complex) of the outer membrane. Acts as a chaperone-like protein that protects the hydrophobic precursors from aggregation and guide them through the mitochondrial intermembrane space. The chain is Mitochondrial import inner membrane translocase subunit Tim8 B (Timm8b) from Mus musculus (Mouse).